Reading from the N-terminus, the 68-residue chain is Putative alpha-conotoxin Qc alphaL-1 (68 aa).

Residues M1–S21 form the signal peptide. Positions I22–R49 are excised as a propeptide. The cysteines at positions 51 and 64 are disulfide-linked.

It belongs to the conotoxin A superfamily. As to expression, expressed by the venom duct.

It localises to the secreted. Alpha-conotoxins act on postsynaptic membranes, they bind to the nicotinic acetylcholine receptors (nAChR) and thus inhibit them. This chain is Putative alpha-conotoxin Qc alphaL-1, found in Conus quercinus (Oak cone).